Consider the following 327-residue polypeptide: Flotillin-like protein FloA (327 aa).

The helical transmembrane segment at 7–27 (FLVPILIVILLLVFFSLVPVG) threads the bilayer.

This sequence belongs to the flotillin-like FloA family. As to quaternary structure, homooligomerizes.

Its subcellular location is the cell membrane. The protein localises to the membrane raft. Functionally, found in functional membrane microdomains (FMM) that may be equivalent to eukaryotic membrane rafts. FMMs are highly dynamic and increase in number as cells age. Flotillins are thought to be important factors in membrane fluidity. The sequence is that of Flotillin-like protein FloA from Finegoldia magna (strain ATCC 29328 / DSM 20472 / WAL 2508) (Peptostreptococcus magnus).